The following is an 86-amino-acid chain: MAHKKGVGSSKNGRESESKRLGVKIFGGQAAIAGNIIVRQRGTAHRPGDNVYAGKDHTLHARVDGLVKFTKKKDDKSYVSIEPFEA.

The protein belongs to the bacterial ribosomal protein bL27 family.

The polypeptide is Large ribosomal subunit protein bL27 (Christiangramia forsetii (strain DSM 17595 / CGMCC 1.15422 / KT0803) (Gramella forsetii)).